Consider the following 736-residue polypeptide: MGMTVVIILVFSFFVAIVTAETSPYIIHMDLSAKPLPFSDHRSWFSTTLTSVITNRKPKIIYAYTDSVHGFSAVLTNSELQRLKHKPGYVSFTKDLPVKLHTTFSPKFIGLNSTSGTWPVSNYGAGIVIGIIDTGIWPDSPSFHDDGVGSVPSKWKGACEFNSSSLCNKKLIGAKVFNKGLFANNPDLRETKIGQYSSPYDTIGHGTHVAAIAAGNHVKNASYFSYAQGTASGIAPHAHLAIYKAAWEEGIYSSDVIAAIDQAIRDGVHVISLSLGLSFEDDDDNDGFGLENDPIAVASFAAIQKGVFVVTSGGNDGPYYWSLINGAPWIMTVGAGTIGRQFQGTLTFGNRVSFSFPSLFPGEFPSVQFPVTYIESGSVENKTLANRIVVCNENINIGSKLHQIRSTGAAAVVLITDKLLEEQDTIKFQFPVAFIGSKHRETIESYASSNKNNATAKLEFRKTVIGTKPAPEVGTYSSRGPFTSFPQILKPDILAPGTLILSAWPSVEQITGTRALPLFSGFNLLTGTSMAAPHVAGVAALIKQVHPNWSPSAIKSAIMTTALTLDNPLAVGAGHVSTNKVLNPGLIYDTTPQDFINFLCHEAKQSRKLINIITRSNISDACKKPSPYLNYPSIIAYFTSDQSSPKIFKRTLTNVGEAKRSYIVRVRGLKGLNVVVEPKKLMFSEKNEKLSYTVRLESPRGLQENVVYGLVSWVDEDEAEFEVSCSVVATSLVQES.

The N-terminal stretch at 1–20 is a signal peptide; the sequence is MGMTVVIILVFSFFVAIVTA. Positions 21–101 are cleaved as a propeptide — activation peptide; that stretch reads ETSPYIIHMD…FTKDLPVKLH (81 aa). One can recognise an Inhibitor I9 domain in the interval 25 to 101; the sequence is YIIHMDLSAK…FTKDLPVKLH (77 aa). The Peptidase S8 domain occupies 103-582; sequence TFSPKFIGLN…AGHVSTNKVL (480 aa). N-linked (GlcNAc...) asparagine glycosylation occurs at Asn-112. Asp-133 functions as the Charge relay system in the catalytic mechanism. Residue Asn-162 is glycosylated (N-linked (GlcNAc...) asparagine). The active-site Charge relay system is the His-205. Residues Asn-220, Asn-381, and Asn-453 are each glycosylated (N-linked (GlcNAc...) asparagine). Residues 367–441 form the PA domain; sequence VQFPVTYIES…VAFIGSKHRE (75 aa). Ser-529 acts as the Charge relay system in catalysis. A glycan (N-linked (GlcNAc...) asparagine) is linked at Asn-617.

This sequence belongs to the peptidase S8 family.

Its subcellular location is the secreted. This Arabidopsis thaliana (Mouse-ear cress) protein is Subtilisin-like protease SBT1.9.